Here is a 514-residue protein sequence, read N- to C-terminus: Na(+)/H(+) antiporter NhaB (514 aa).

11 consecutive transmembrane segments (helical) span residues 13–33 (FMGNSPDWYKLAIITFLIINP), 34–54 (LIFFFVDPFIAGWLLVVEFIF), 96–116 (VILLLVFMVAGIYFMKQLLLF), 136–156 (CFASAFLSAFLDALTVIAVVI), 203–223 (LMMHAGVGTALGGVMTMVGEP), 236–256 (FVTFFIRMSPVTIPVFFAGLA), 304–324 (ALIGIWLIVALALHLAEVGII), 349–369 (EEALPFTALLTVFFSVVAVII), 392–412 (LFYLFNGLLSAISDNVFVGTV), 448–468 (ATPNGQAAFLFLLTSALSPLI), and 479–499 (ALPYTIVMTLLGLLAVEFWLV).

It belongs to the NhaB Na(+)/H(+) (TC 2.A.34) antiporter family.

The protein localises to the cell inner membrane. It carries out the reaction 2 Na(+)(in) + 3 H(+)(out) = 2 Na(+)(out) + 3 H(+)(in). Functionally, na(+)/H(+) antiporter that extrudes sodium in exchange for external protons. This chain is Na(+)/H(+) antiporter NhaB, found in Proteus mirabilis (strain HI4320).